Reading from the N-terminus, the 481-residue chain is Aspartyl/glutamyl-tRNA(Asn/Gln) amidotransferase subunit B (481 aa).

It belongs to the GatB/GatE family. GatB subfamily. Heterotrimer of A, B and C subunits.

The enzyme catalyses L-glutamyl-tRNA(Gln) + L-glutamine + ATP + H2O = L-glutaminyl-tRNA(Gln) + L-glutamate + ADP + phosphate + H(+). It catalyses the reaction L-aspartyl-tRNA(Asn) + L-glutamine + ATP + H2O = L-asparaginyl-tRNA(Asn) + L-glutamate + ADP + phosphate + 2 H(+). In terms of biological role, allows the formation of correctly charged Asn-tRNA(Asn) or Gln-tRNA(Gln) through the transamidation of misacylated Asp-tRNA(Asn) or Glu-tRNA(Gln) in organisms which lack either or both of asparaginyl-tRNA or glutaminyl-tRNA synthetases. The reaction takes place in the presence of glutamine and ATP through an activated phospho-Asp-tRNA(Asn) or phospho-Glu-tRNA(Gln). The sequence is that of Aspartyl/glutamyl-tRNA(Asn/Gln) amidotransferase subunit B from Cellvibrio japonicus (strain Ueda107) (Pseudomonas fluorescens subsp. cellulosa).